The chain runs to 194 residues: ATP-dependent Clp protease proteolytic subunit (194 aa).

Ser98 serves as the catalytic Nucleophile. His123 is a catalytic residue.

It belongs to the peptidase S14 family. Fourteen ClpP subunits assemble into 2 heptameric rings which stack back to back to give a disk-like structure with a central cavity, resembling the structure of eukaryotic proteasomes.

The protein localises to the cytoplasm. The enzyme catalyses Hydrolysis of proteins to small peptides in the presence of ATP and magnesium. alpha-casein is the usual test substrate. In the absence of ATP, only oligopeptides shorter than five residues are hydrolyzed (such as succinyl-Leu-Tyr-|-NHMec, and Leu-Tyr-Leu-|-Tyr-Trp, in which cleavage of the -Tyr-|-Leu- and -Tyr-|-Trp bonds also occurs).. Functionally, cleaves peptides in various proteins in a process that requires ATP hydrolysis. Has a chymotrypsin-like activity. Plays a major role in the degradation of misfolded proteins. This is ATP-dependent Clp protease proteolytic subunit from Staphylococcus carnosus (strain TM300).